We begin with the raw amino-acid sequence, 102 residues long: Co-chaperonin GroES (102 aa).

The protein belongs to the GroES chaperonin family. As to quaternary structure, heptamer of 7 subunits arranged in a ring. Interacts with the chaperonin GroEL.

It is found in the cytoplasm. Together with the chaperonin GroEL, plays an essential role in assisting protein folding. The GroEL-GroES system forms a nano-cage that allows encapsulation of the non-native substrate proteins and provides a physical environment optimized to promote and accelerate protein folding. GroES binds to the apical surface of the GroEL ring, thereby capping the opening of the GroEL channel. This is Co-chaperonin GroES from Streptomyces avermitilis (strain ATCC 31267 / DSM 46492 / JCM 5070 / NBRC 14893 / NCIMB 12804 / NRRL 8165 / MA-4680).